A 136-amino-acid chain; its full sequence is MKKFDILDFFYIKSQDTQILRYYISKNPTNYGGLSLTNGAEGKTSTMAKSLNTTPTLDTMPMFTEDVCFAAYSIDMQKILHNMKLKTNLEYPGLLFDHEGPDCLPLIKEAYGFVDKSFWVLPGRGKELFKDVKKVR.

The protein localises to the mitochondrion. This is an uncharacterized protein from Marchantia polymorpha (Common liverwort).